We begin with the raw amino-acid sequence, 342 residues long: MIRVLVVEDMPTARQLLVGILSADPELEVVGQASDGAEALALVRALRPDAITMDVMMMPVDGIQATAQIMAERPTPIVIVTSLDVNEVTLSMKALAAGALAALPKPRGPGSPGFADDARRLVTTVKAMSRVALLRRPEPARAAAPPPAAPPDVPRGRVVAVAASTGGPAALQRILARLPAALPAPLLVVQHIALGFAEGFARWLASAGPLPARVARDGLLLEPGVVHVAPDDRHLGVSADGTRATVTDAAPVGGFRPSGTPLFRSVAAAYGAGAVGVILSGMGRDGVEGLADLRRAGGRVVAQEAASCAVDGMPGAARAAGLADAVLAPDAIADRLALWLRR.

A Response regulatory domain is found at 3-120 (RVLVVEDMPT…SPGFADDARR (118 aa)). 4-aspartylphosphate is present on D54. The CheB-type methylesterase domain maps to 152 to 342 (DVPRGRVVAV…ADRLALWLRR (191 aa)). Catalysis depends on residues S164, H191, and D285.

It belongs to the CheB family. Post-translationally, phosphorylated by CheA. Phosphorylation of the N-terminal regulatory domain activates the methylesterase activity.

It is found in the cytoplasm. The catalysed reaction is [protein]-L-glutamate 5-O-methyl ester + H2O = L-glutamyl-[protein] + methanol + H(+). It carries out the reaction L-glutaminyl-[protein] + H2O = L-glutamyl-[protein] + NH4(+). Its function is as follows. Involved in chemotaxis. Part of a chemotaxis signal transduction system that modulates chemotaxis in response to various stimuli. Catalyzes the demethylation of specific methylglutamate residues introduced into the chemoreceptors (methyl-accepting chemotaxis proteins or MCP) by CheR. Also mediates the irreversible deamidation of specific glutamine residues to glutamic acid. The sequence is that of Protein-glutamate methylesterase/protein-glutamine glutaminase 3 from Anaeromyxobacter dehalogenans (strain 2CP-C).